We begin with the raw amino-acid sequence, 322 residues long: 3-hydroxyacyl-CoA dehydrogenase FVEG_12628 (322 aa).

A helical transmembrane segment spans residues 5-25 (IRTVAIVGCGVIGMGWAVLFL). The active-site For hydroxyacyl-coenzyme A dehydrogenase activity is Glu151.

The protein belongs to the 3-hydroxyacyl-CoA dehydrogenase family.

It localises to the membrane. In terms of biological role, 3-hydroxyacyl-CoA dehydrogenase; part of the Fusarium detoxification of benzoxazolinone cluster 2 (FDB2) involved in the degradation of benzoxazolinones produced by the host plant. Maize, wheat, and rye produce the 2 benzoxazinone phytoanticipins 2,4-dihy-droxy-7-methoxy-1,4-benzoxazin-3-one (DIMBOA) and 2,4-dihydroxy-1,4-benzoxazin-3-one (DIBOA) that, due to their inherent instability once released, spontaneously degrade to the more stable corresponding benzoxazolinones, 6-methoxy-2-benzoxazolinone (MBOA) and 2-benzoxazolinone (BOA), respectively. The first step in the detoxification of benzoxazolinones involves the hydrolysis of the cyclic ester bond of benzoxazolinones by the FDB1 cluster gamma-lactamase MBL1 to aminophenols. MBL1 is able to convert BOA into 2-aminophenol (2-AP), as well as MBOA into 5-methoxy-2-aminophenol (2-AMP). The FDB2 cluster N-malonyltransferase FDB2/NAT1 then metabolizes aminophenols via N-malonylation to non-toxic malonamic acids. FDB2/NAT1 converts 2-AP into N-(2-hydroxyphenyl) malonamic acid (HPMA) and 2-AMP into N-(2-hydroxy-4-methoxyphenyl) malonamic acid (HMPMA). The duplicated dienlactone hydrolases DLH1 and DLH2 may provide redundant function for hydrolyzing the lactone moiety in the BOA molecule. The roles of the amidases an other enzymes encoded by the 2 FDB clusters have not been identified so far. The polypeptide is 3-hydroxyacyl-CoA dehydrogenase FVEG_12628 (Gibberella moniliformis (strain M3125 / FGSC 7600) (Maize ear and stalk rot fungus)).